The primary structure comprises 278 residues: Pantothenate synthetase (278 aa).

27 to 34 lines the ATP pocket; that stretch reads MGNLHEGH. The active-site Proton donor is the His34. Position 58 (Gln58) interacts with (R)-pantoate. Gln58 is a binding site for beta-alanine. 147–150 lines the ATP pocket; the sequence is GEKD. Residue Gln153 participates in (R)-pantoate binding. 184 to 187 contributes to the ATP binding site; it reads YSSR.

This sequence belongs to the pantothenate synthetase family. Homodimer.

Its subcellular location is the cytoplasm. The enzyme catalyses (R)-pantoate + beta-alanine + ATP = (R)-pantothenate + AMP + diphosphate + H(+). The protein operates within cofactor biosynthesis; (R)-pantothenate biosynthesis; (R)-pantothenate from (R)-pantoate and beta-alanine: step 1/1. Its function is as follows. Catalyzes the condensation of pantoate with beta-alanine in an ATP-dependent reaction via a pantoyl-adenylate intermediate. The protein is Pantothenate synthetase of Acidithiobacillus ferrooxidans (strain ATCC 23270 / DSM 14882 / CIP 104768 / NCIMB 8455) (Ferrobacillus ferrooxidans (strain ATCC 23270)).